Reading from the N-terminus, the 250-residue chain is Probable E3 ubiquitin-protein ligase RHY1A (250 aa).

Polar residues predominate over residues 1 to 10 (MTSASELFST). A disordered region spans residues 1 to 106 (MTSASELFST…ETQSSSFVNL (106 aa)). The span at 29-47 (YRHHSHHHHRRHGVHHHNQ) shows a compositional bias: basic residues. Residues 48–58 (RHDSDGCDPLR) are compositionally biased toward basic and acidic residues. Residues 60–69 (PTPRLRRFFH) show a composition bias toward basic residues. The segment covering 71-80 (PIQERSRPIR) has biased composition (basic and acidic residues). The span at 91–102 (TDSTDTETQSSS) shows a compositional bias: low complexity. The RING-type; atypical zinc finger occupies 203–244 (CSICLESFTKGDMLISLPCTHSFHSSCLNPWLRACGDCPCCR).

It catalyses the reaction S-ubiquitinyl-[E2 ubiquitin-conjugating enzyme]-L-cysteine + [acceptor protein]-L-lysine = [E2 ubiquitin-conjugating enzyme]-L-cysteine + N(6)-ubiquitinyl-[acceptor protein]-L-lysine.. The protein operates within protein modification; protein ubiquitination. In terms of biological role, probable E3 ubiquitin-protein ligase that may possess E3 ubiquitin ligase activity in vitro. This chain is Probable E3 ubiquitin-protein ligase RHY1A, found in Arabidopsis thaliana (Mouse-ear cress).